Consider the following 43-residue polypeptide: Iota-conotoxin-like S11.2 (43 aa).

4 cysteine pairs are disulfide-bonded: C2–C16, C9–C19, C15–C24, and C18–C35. A D-methionine modification is found at M41. Position 43 (R43) is a propeptide, removed by a carboxypeptidase.

It belongs to the conotoxin I1 superfamily. Expressed by the venom duct.

It localises to the secreted. Functionally, iota-conotoxins bind to voltage-gated sodium channels (Nav) and act as agonists by shifting the voltage-dependence of activation to more hyperpolarized levels. Produces general excitatory symptoms. This Conus striatus (Striated cone) protein is Iota-conotoxin-like S11.2.